The following is a 464-amino-acid chain: Argininosuccinate lyase (464 aa).

This sequence belongs to the lyase 1 family. Argininosuccinate lyase subfamily.

It localises to the cytoplasm. The catalysed reaction is 2-(N(omega)-L-arginino)succinate = fumarate + L-arginine. Its pathway is amino-acid biosynthesis; L-arginine biosynthesis; L-arginine from L-ornithine and carbamoyl phosphate: step 3/3. This is Argininosuccinate lyase from Pseudomonas paraeruginosa (strain DSM 24068 / PA7) (Pseudomonas aeruginosa (strain PA7)).